A 317-amino-acid polypeptide reads, in one-letter code: Pinoresinol reductase 1 (317 aa).

Residues Thr18, Tyr20, Ile21, Arg41, Lys50, Ser90, Gly91, Arg95, Asn98, Ser121, and Glu122 each contribute to the NADP(+) site. (-)-pinoresinol is bound at residue Met125. NADP(+) contacts are provided by Lys144 and Phe166. Residue Lys144 is the Proton acceptor of the active site. Met177 and Val178 together coordinate (-)-pinoresinol.

This sequence belongs to the NmrA-type oxidoreductase family. Isoflavone reductase subfamily. Forms homodimers. Expressed in roots and stems.

The catalysed reaction is (-)-lariciresinol + NADP(+) = (-)-pinoresinol + NADPH + H(+). The enzyme catalyses (+)-lariciresinol + NADP(+) = (+)-pinoresinol + NADPH + H(+). Its function is as follows. Reductase involved in lignan biosynthesis. Involved in secondary cell wall biosynthesis in fiber cells. Unlike conventional pinoresinol reductases that can reduce both pinoresinol and lariciresinol, PRR1 shows a strict substrate preference toward pinoresinol. Active on both (+) and (-)-pinoresinol. Abstracts the 4R-hydride from the NADPH cofactor during catalysis. This is Pinoresinol reductase 1 from Arabidopsis thaliana (Mouse-ear cress).